The primary structure comprises 361 residues: Peptide chain release factor 1 (361 aa).

At Gln235 the chain carries N5-methylglutamine.

It belongs to the prokaryotic/mitochondrial release factor family. Methylated by PrmC. Methylation increases the termination efficiency of RF1.

The protein localises to the cytoplasm. Functionally, peptide chain release factor 1 directs the termination of translation in response to the peptide chain termination codons UAG and UAA. The protein is Peptide chain release factor 1 of Rhodopseudomonas palustris (strain ATCC BAA-98 / CGA009).